Consider the following 324-residue polypeptide: Olfactory receptor 5T17 (324 aa).

Over 1 to 37 the chain is Extracellular; that stretch reads MPRTPSYTNTKTTQVNNVTEITVFILLGFTDDVDMNI. N17 is a glycosylation site (N-linked (GlcNAc...) asparagine). The helical transmembrane segment at 38–58 threads the bilayer; it reads FLFILFLAIYVVTLIGNLGLV. Over 59 to 66 the chain is Cytoplasmic; it reads VLVIEDSR. The chain crosses the membrane as a helical span at residues 67–87; the sequence is LHNPMYYFLTVLSSLDACFSS. The Extracellular segment spans residues 88–111; the sequence is VLTPKMLVNFLSKNKSISFAGCAT. The N-linked (GlcNAc...) asparagine glycan is linked to N101. C109 and C201 are oxidised to a cystine. The helical transmembrane segment at 112-132 threads the bilayer; the sequence is QMLLFVTFGTTECFLLAAMAY. Over 133–145 the chain is Cytoplasmic; sequence DRYLAIYSPLLYA. Residues 146–166 form a helical membrane-spanning segment; it reads VRMSPRVYVPLIIASYTGGIL. Topologically, residues 167–208 are extracellular; it reads HATIHTVATFSLSFCGSNEIRHVFCDIPPLLALSCSDTHLNQ. Residues 209–229 traverse the membrane as a helical segment; it reads LLLFYCAGSIELITILIVLVS. The Cytoplasmic segment spans residues 230-249; the sequence is YGFVLLAILKINSAEGRRKI. The helical transmembrane segment at 250–270 threads the bilayer; the sequence is FSTCGAHLTGVSIFHGTILFM. At 271–283 the chain is on the extracellular side; that stretch reads YVRPSSNYTLEQD. N277 carries an N-linked (GlcNAc...) asparagine glycan. A helical transmembrane segment spans residues 284-304; the sequence is MVVSTFYTIVIPMLNPIIYSL. Residues 305–324 are Cytoplasmic-facing; sequence RNKDVKEAMRKLLKRKLVHE.

Belongs to the G-protein coupled receptor 1 family.

The protein resides in the cell membrane. Functionally, potential odorant receptor. In Mus musculus (Mouse), this protein is Olfactory receptor 5T17.